Consider the following 279-residue polypeptide: Mirror-image polydactyly gene 1 protein homolog (279 aa).

Basic and acidic residues predominate over residues Met-1 to Gly-11. The disordered stretch occupies residues Met-1–Leu-21. Coiled-coil stretches lie at residues Leu-65–Asn-169 and Ala-218–Asn-255. The tract at residues Lys-247–Thr-268 is disordered. Polar residues predominate over residues Gln-248–Asn-263.

This chain is Mirror-image polydactyly gene 1 protein homolog (Mipol1), found in Mus musculus (Mouse).